The following is a 397-amino-acid chain: GDP-mannose transporter 1 (397 aa).

Residues 1-57 (MSKPFVPTPNISRPATPSSLDYGKDEASSTLLRDMGERGDRERKDREERDKKEAMPS) form a disordered region. Residues 1–61 (MSKPFVPTPN…KEAMPSGQDQ (61 aa)) are Cytoplasmic-facing. Residues 9 to 19 (PNISRPATPSS) show a composition bias toward polar residues. Basic and acidic residues predominate over residues 34-54 (DMGERGDRERKDREERDKKEA). Residues 62–82 (VLPILSYCAASIMMTVVNKYV) traverse the membrane as a helical segment. At 83-87 (VSGAN) the chain is on the lumenal side. Asparagine 87 is a glycosylation site (N-linked (GlcNAc...) asparagine). The helical transmembrane segment at 88–108 (FTMTFLLLAIQSSVCVLAVTT) threads the bilayer. Residues 109–124 (VKKLGFISFRDFDKND) are Cytoplasmic-facing. Residues 125 to 142 (AKAWWPISTLLVAVIYTG) traverse the membrane as a helical segment. The Lumenal portion of the chain corresponds to 143 to 145 (SKA). Residues 146–168 (LQFLSIPVYTIFKNLTIILIAYG) form a helical membrane-spanning segment. The Cytoplasmic portion of the chain corresponds to 169–174 (EVFMFN). The chain crosses the membrane as a helical span at residues 175–197 (GAVSGLTLCSFALMVGSSIIAAW). The Lumenal portion of the chain corresponds to 198–228 (SDITSVWNKEPELDPITGLEITVGPVSTIGG). A helical transmembrane segment spans residues 229–249 (LNAGYIWMALNCFVSAAYVLF). The Cytoplasmic segment spans residues 250-272 (MRKRIKVTGFKDWDSMYYNNLLS). The helical transmembrane segment at 273 to 293 (IPILVVFSLVIEDWGSESLAL) threads the bilayer. The Lumenal segment spans residues 294–300 (NFPASNR). A helical membrane pass occupies residues 301-321 (VLLLSAMAFSGAAAVFISYST). Over 322–332 (AWCVRITGSTT) the chain is Cytoplasmic. The chain crosses the membrane as a helical span at residues 333–353 (YSMVGALNKLPVAASGILFFG). Residues 354–355 (DP) lie on the Lumenal side of the membrane. Residues 356 to 376 (ANFGNISAIAVGGVAGVVYAV) form a helical membrane-spanning segment. At 377–397 (AKTNQAKVEKARQARAAGGRP) the chain is on the cytoplasmic side.

Belongs to the TPT transporter family. SLC35D subfamily. Homooligomer.

Its subcellular location is the golgi apparatus membrane. The protein localises to the cytoplasmic vesicle membrane. The protein resides in the endoplasmic reticulum membrane. Involved in the import of GDP-mannose from the cytoplasm into the Golgi lumen. Involved in capsule synthesis. The polypeptide is GDP-mannose transporter 1 (GMT1) (Cryptococcus neoformans var. neoformans serotype D (strain B-3501A) (Filobasidiella neoformans)).